The primary structure comprises 198 residues: MYEHLKRYGVSKNIIEAMNKIDRKYFVPENVKDLAYDDIPLPIGFGQTISAPHMVGIMCKELDLKEKDKVLEIGTGSGYNAAVMSLLVGKSGHIYTIERIKQLYKIATKRFKQFGLTNITCILGDGKEGFEEYAPFDKIVVTCYSKFVPNKLLEQLSDNGILLIPVGDEFVQVLKKIKKINGQISEEDLLHVKFVPLV.

S50 is an active-site residue.

It belongs to the methyltransferase superfamily. L-isoaspartyl/D-aspartyl protein methyltransferase family.

It is found in the cytoplasm. It carries out the reaction [protein]-L-isoaspartate + S-adenosyl-L-methionine = [protein]-L-isoaspartate alpha-methyl ester + S-adenosyl-L-homocysteine. Catalyzes the methyl esterification of L-isoaspartyl residues in peptides and proteins that result from spontaneous decomposition of normal L-aspartyl and L-asparaginyl residues. It plays a role in the repair and/or degradation of damaged proteins. The sequence is that of Protein-L-isoaspartate O-methyltransferase from Thermosipho melanesiensis (strain DSM 12029 / CIP 104789 / BI429).